The chain runs to 208 residues: Outer-membrane lipoprotein carrier protein (208 aa).

A signal peptide spans 1-22 (MKKRLCAVLLASPLLFSAAVFA).

The protein belongs to the LolA family. As to quaternary structure, monomer.

It localises to the periplasm. Its function is as follows. Participates in the translocation of lipoproteins from the inner membrane to the outer membrane. Only forms a complex with a lipoprotein if the residue after the N-terminal Cys is not an aspartate (The Asp acts as a targeting signal to indicate that the lipoprotein should stay in the inner membrane). This is Outer-membrane lipoprotein carrier protein from Shewanella baltica (strain OS195).